Reading from the N-terminus, the 711-residue chain is C-Jun-amino-terminal kinase-interacting protein 1 (711 aa).

The interval 1 to 27 is disordered; that stretch reads MAERESGGLGGGAASPPAASPFLGLHI. The segment covering 14-25 has biased composition (low complexity); it reads ASPPAASPFLGL. S15, S29, and S40 each carry phosphoserine. A disordered region spans residues 78-371; sequence AGGGGAGSRL…PPRASLSSDT (294 aa). A Phosphothreonine; by MAPK8, MAPK9 and MAPK10 modification is found at T103. Residues 105–116 are compositionally biased toward acidic residues; the sequence is GAEDDEEDDDEE. Residues 127 to 285 are JNK-binding domain (JBD); sequence PKAESGQEPA…EATEEIYLTP (159 aa). The span at 139–149 shows a compositional bias: low complexity; the sequence is GQGQSQGQSQG. At S152 the chain carries Phosphoserine. Residues 157-176 are minimal inhibitory domain (MID); sequence RPKRPTTLNLFPQVPRSQDT. Residues 162 to 182 are compositionally biased toward polar residues; it reads TTLNLFPQVPRSQDTLNNNSL. 5 positions are modified to phosphoserine: S181, S187, S193, S195, and S196. Over residues 194-204 the composition is skewed to polar residues; it reads RSSSPLKTGEQ. T205 bears the Phosphothreonine; by MAPK8, MAPK9 and MAPK10 mark. S214 carries the post-translational modification Phosphoserine. Positions 228-244 are enriched in polar residues; that stretch reads DRGTSTDSPCRRSTATQ. Positions 267–277 are enriched in basic and acidic residues; that stretch reads IHYQADVRLEA. The segment at 283-471 is interaction with MAP3K7; it reads LTPVQRPPDA…NVFMSGRSRS (189 aa). S311, S328, S330, S340, S355, S366, S369, S407, and S409 each carry phosphoserine. 2 consecutive short sequence motifs (D-box) follow at residues 353 to 360 and 364 to 372; these read RGSLGEPP and RASLSSDTS. At T411 the chain carries Phosphothreonine. The disordered stretch occupies residues 429–451; it reads EEYEEAPRPQPPACLSEDSTPDE. Phosphoserine is present on residues S444 and S447. A Phosphothreonine modification is found at T448. S469, S471, S472, and S473 each carry phosphoserine. Residues 471–660 are interaction with VRK2; it reads SSSAESFGLF…PKNNKYFGFI (190 aa). The SH3 domain maps to 488–549; sequence EQEQTHRAIF…PAYYAIEVTK (62 aa). The PID domain maps to 561-700; sequence SDWVDQFRVK…FQQFYKQFVE (140 aa).

This sequence belongs to the JIP scaffold family. As to quaternary structure, forms homo- or heterooligomeric complexes. Binds specific components of the JNK signaling pathway namely, MAPK8/JNK1, MAPK9/JNK2, MAPK10/JNK3, MAP2K7/MKK7, MAP3K11/MLK3 and DLK1. Also binds the proline-rich domain-containing splice variant of apolipoprotein E receptor 2 (ApoER2). Interacts, via the PID domain, with ARHGEF28. Binds the cytoplasmic tails of LRP1 and LRP2 (Megalin). Binds the TPR motif-containing C-terminal of KNS2, then the pre-assembled MAPK8IP1 scaffolding complexes are transported as a cargo of kinesin, to the required subcellular location. Interacts with the cytoplasmic domain of APP. Interacts with DCLK2. Interacts with MAP3K7/TAK1. Interacts with isoform 1 and isoform 2 of VRK2. Found in a complex with SH3RF1, RAC1, MAP3K11/MLK3, MAP2K7/MKK7 and MAPK8/JNK1. Found in a complex with SH3RF1, RAC2, MAP3K7/TAK1, MAP2K7/MKK7, MAPK8/JNK1 and MAPK9/JNK2. Interacts with SH3RF2. Phosphorylated by MAPK8, MAPK9 and MAPK10. Phosphorylation on Thr-103 is also necessary for the dissociation and activation of MAP3K12. Phosphorylated by isoform 1 and isoform 2 of VRK2. Hyperphosphorylated during mitosis following activation of stress-activated and MAP kinases. Post-translationally, ubiquitinated. Two preliminary events are required to prime for ubiquitination; phosphorylation and an increased in intracellular calcium concentration. Then, the calcium influx initiates ubiquitination and degradation by the ubiquitin-proteasome pathway. Highly expressed in brain. Expressed in neurons, localizing to neurite tips in differentiating cells. Also expressed in the pancreas, testis and prostate. Low levels in heart, ovary and small intestine. Decreased levels in pancreatic beta cells sensitize cells to IL-1-beta-induced apoptosis.

Its subcellular location is the cytoplasm. It is found in the perinuclear region. The protein localises to the nucleus. It localises to the endoplasmic reticulum membrane. The protein resides in the mitochondrion membrane. In terms of biological role, the JNK-interacting protein (JIP) group of scaffold proteins selectively mediates JNK signaling by aggregating specific components of the MAPK cascade to form a functional JNK signaling module. Required for JNK activation in response to excitotoxic stress. Cytoplasmic MAPK8IP1 causes inhibition of JNK-regulated activity by retaining JNK in the cytoplasm and inhibiting JNK phosphorylation of c-Jun. May also participate in ApoER2-specific reelin signaling. Directly, or indirectly, regulates GLUT2 gene expression and beta-cell function. Appears to have a role in cell signaling in mature and developing nerve terminals. May function as a regulator of vesicle transport, through interactions with the JNK-signaling components and motor proteins. Functions as an anti-apoptotic protein and whose level seems to influence the beta-cell death or survival response. Acts as a scaffold protein that coordinates with SH3RF1 in organizing different components of the JNK pathway, including RAC1 or RAC2, MAP3K11/MLK3 or MAP3K7/TAK1, MAP2K7/MKK7, MAPK8/JNK1 and/or MAPK9/JNK2 into a functional multiprotein complex to ensure the effective activation of the JNK signaling pathway. Regulates the activation of MAPK8/JNK1 and differentiation of CD8(+) T-cells. This is C-Jun-amino-terminal kinase-interacting protein 1 (MAPK8IP1) from Homo sapiens (Human).